The chain runs to 468 residues: Glutamate--tRNA ligase (468 aa).

An L-glutamate-binding site is contributed by 5 to 7; it reads RIA. The short motif at 8-18 is the 'HIGH' region element; sequence PSPTGDPHVGT. An ATP-binding site is contributed by H15. L-glutamate contacts are provided by residues E41, 187–191, and R205; that span reads YHLAN. ATP-binding positions include E208, L236, 243-247, and K246; that span reads KISKR. The 'KMSKS' region signature appears at 243 to 247; sequence KISKR. The tract at residues 432-447 is interaction with tRNA; it reads QPLRAALTGSLETPGL.

It belongs to the class-I aminoacyl-tRNA synthetase family. Glutamate--tRNA ligase type 1 subfamily. In terms of assembly, monomer.

The protein localises to the cytoplasm. It carries out the reaction tRNA(Glu) + L-glutamate + ATP = L-glutamyl-tRNA(Glu) + AMP + diphosphate. Its activity is regulated as follows. In the absence of bound tRNA, ATP is bound in a non-productive mode, and the enzyme cannot activate amino acids. Functionally, catalyzes the attachment of glutamate to tRNA(Glu) in a two-step reaction: glutamate is first activated by ATP to form Glu-AMP and then transferred to the acceptor end of tRNA(Glu). The sequence is that of Glutamate--tRNA ligase from Thermus thermophilus (strain ATCC 27634 / DSM 579 / HB8).